A 1675-amino-acid polypeptide reads, in one-letter code: Clathrin heavy chain 1 (1675 aa).

Residue alanine 2 is modified to N-acetylalanine. The interval 2 to 479 (AQILPIRFQE…VDPTLALSVY (478 aa)) is globular terminal domain. WD40-like repeat regions lie at residues 24–67 (NIGF…RPIS), 68–107 (ADSA…MTDD), 108–149 (VTFW…SSLA), 150–195 (GCQI…QPIE), 196–257 (GHAA…PEAQ), 258–301 (NDFP…ISGE), and 302–330 (TIFV…VCVE). Serine 67 is subject to Phosphoserine. A Phosphothreonine modification is found at threonine 105. Tyrosine 184 carries the post-translational modification Phosphotyrosine. Threonine 394 bears the Phosphothreonine mark. The binding site for the uncoating ATPase, involved in lattice disassembly stretch occupies residues 449–465 (EKWLKEDKLECSEELGD). The tract at residues 480–523 (LRANVPNKVIQCFAETGQVQKIVLYAKKVGYTPDWIFLLRNVMR) is flexible linker. Residues 524-634 (ISPDQGQQFA…RALEHFTDLY (111 aa)) are distal segment. The interval 524–1675 (ISPDQGQQFA…QPQPGFGYSM (1152 aa)) is heavy chain arm. 7 CHCR repeats span residues 537–683 (VQDE…QICV), 686–828 (ASKY…SEDV), 833–972 (ILVV…PLID), 979–1124 (LSET…VKEA), 1128–1269 (YIKA…FRLA), 1274–1420 (LHIV…LLLN), and 1423–1566 (LMVL…RECF). Tyrosine 634 carries the post-translational modification Phosphotyrosine. Positions 639-1675 (AVVHTHLLNP…QPQPGFGYSM (1037 aa)) are proximal segment. Lysine 737 carries the N6-succinyllysine modification. Lysine 856 bears the N6-acetyllysine mark. At tyrosine 899 the chain carries Phosphotyrosine. Serine 1167 carries the post-translational modification Phosphoserine. A Phosphotyrosine modification is found at tyrosine 1206. The interval 1213 to 1522 (AAKLLYNNVS…YLFKGNNRWK (310 aa)) is involved in binding clathrin light chain. Serine 1229 is subject to Phosphoserine. Position 1441 is an N6-acetyllysine; alternate (lysine 1441). Lysine 1441 carries the post-translational modification N6-succinyllysine; alternate. Residues tyrosine 1477 and tyrosine 1487 each carry the phosphotyrosine modification. Serine 1494 bears the Phosphoserine mark. N6-acetyllysine is present on lysine 1501. Positions 1550-1675 (AEELLQWFLQ…QPQPGFGYSM (126 aa)) are trimerization.

The protein belongs to the clathrin heavy chain family. As to quaternary structure, clathrin triskelions, composed of 3 heavy chains and 3 light chains, are the basic subunits of the clathrin coat. In the presence of light chains, hub assembly is influenced by both the pH and the concentration of calcium. Interacts with HIP1. Interacts with DENND1A, DENND1B and DENND1C. Interacts with OCRL. Interacts with ERBB2. Interacts with FKBP6. Interacts with CKAP5 and TACC3 forming the TACC3/ch-TOG/clathrin complex located at spindle inter-microtubules bridges; the complex implicates clathrin triskelions; TACC3 and CLTC are proposed to form a composite microtubule interaction surface. Interacts with ATG16L1 (via N-terminus). Interacts with RFTN1; the interaction occurs in response to pathogens. Interacts with TMEM106B (via N-terminus). Interacts with DNAJC6; this interaction produces a local change in heavy-chain contacts, creating a detectable global distortion of the clathrin coat and leads to the recruitment of HSPA8.

It is found in the cytoplasmic vesicle membrane. The protein resides in the membrane. Its subcellular location is the coated pit. It localises to the melanosome. The protein localises to the cytoplasm. It is found in the cytoskeleton. The protein resides in the spindle. Functionally, clathrin is the major protein of the polyhedral coat of coated pits and vesicles. Two different adapter protein complexes link the clathrin lattice either to the plasma membrane or to the trans-Golgi network. Acts as a component of the TACC3/ch-TOG/clathrin complex proposed to contribute to stabilization of kinetochore fibers of the mitotic spindle by acting as inter-microtubule bridge. The TACC3/ch-TOG/clathrin complex is required for the maintenance of kinetochore fiber tension. Plays a role in early autophagosome formation. Interaction with DNAJC6 mediates the recruitment of HSPA8 to the clathrin lattice and creates local destabilization of the lattice promoting uncoating. This chain is Clathrin heavy chain 1, found in Bos taurus (Bovine).